The chain runs to 349 residues: Anthranilate phosphoribosyltransferase (349 aa).

Residues Gly82, 85-86, Thr90, 92-95, 110-118, and Gly122 each bind 5-phospho-alpha-D-ribose 1-diphosphate; these read GD, NVST, and KHGNRSVSS. Gly82 serves as a coordination point for anthranilate. Ser94 serves as a coordination point for Mg(2+). Asn113 contacts anthranilate. Arg168 lines the anthranilate pocket. The Mg(2+) site is built by Asp232 and Glu233.

This sequence belongs to the anthranilate phosphoribosyltransferase family. As to quaternary structure, homodimer. The cofactor is Mg(2+).

The enzyme catalyses N-(5-phospho-beta-D-ribosyl)anthranilate + diphosphate = 5-phospho-alpha-D-ribose 1-diphosphate + anthranilate. The protein operates within amino-acid biosynthesis; L-tryptophan biosynthesis; L-tryptophan from chorismate: step 2/5. Its function is as follows. Catalyzes the transfer of the phosphoribosyl group of 5-phosphorylribose-1-pyrophosphate (PRPP) to anthranilate to yield N-(5'-phosphoribosyl)-anthranilate (PRA). The chain is Anthranilate phosphoribosyltransferase from Methanosphaera stadtmanae (strain ATCC 43021 / DSM 3091 / JCM 11832 / MCB-3).